The primary structure comprises 319 residues: Acetyl-coenzyme A carboxylase carboxyl transferase subunit alpha (319 aa).

A CoA carboxyltransferase C-terminal domain is found at 35 to 296; the sequence is DLDKEIEQLE…KDMLVKQLEE (262 aa).

It belongs to the AccA family. As to quaternary structure, acetyl-CoA carboxylase is a heterohexamer composed of biotin carboxyl carrier protein (AccB), biotin carboxylase (AccC) and two subunits each of ACCase subunit alpha (AccA) and ACCase subunit beta (AccD).

The protein localises to the cytoplasm. It catalyses the reaction N(6)-carboxybiotinyl-L-lysyl-[protein] + acetyl-CoA = N(6)-biotinyl-L-lysyl-[protein] + malonyl-CoA. It functions in the pathway lipid metabolism; malonyl-CoA biosynthesis; malonyl-CoA from acetyl-CoA: step 1/1. Functionally, component of the acetyl coenzyme A carboxylase (ACC) complex. First, biotin carboxylase catalyzes the carboxylation of biotin on its carrier protein (BCCP) and then the CO(2) group is transferred by the carboxyltransferase to acetyl-CoA to form malonyl-CoA. In Vibrio atlanticus (strain LGP32) (Vibrio splendidus (strain Mel32)), this protein is Acetyl-coenzyme A carboxylase carboxyl transferase subunit alpha.